Consider the following 84-residue polypeptide: Small ribosomal subunit protein bS18 (84 aa).

This sequence belongs to the bacterial ribosomal protein bS18 family. In terms of assembly, part of the 30S ribosomal subunit. Forms a tight heterodimer with protein bS6.

In terms of biological role, binds as a heterodimer with protein bS6 to the central domain of the 16S rRNA, where it helps stabilize the platform of the 30S subunit. The protein is Small ribosomal subunit protein bS18 of Helicobacter hepaticus (strain ATCC 51449 / 3B1).